Consider the following 140-residue polypeptide: Large ribosomal subunit protein uL11 (140 aa).

The protein belongs to the universal ribosomal protein uL11 family. As to quaternary structure, part of the ribosomal stalk of the 50S ribosomal subunit. Interacts with L10 and the large rRNA to form the base of the stalk. L10 forms an elongated spine to which L12 dimers bind in a sequential fashion forming a multimeric L10(L12)X complex. In terms of processing, one or more lysine residues are methylated.

Functionally, forms part of the ribosomal stalk which helps the ribosome interact with GTP-bound translation factors. This chain is Large ribosomal subunit protein uL11, found in Geobacter metallireducens (strain ATCC 53774 / DSM 7210 / GS-15).